The primary structure comprises 91 residues: Small ribosomal subunit protein uS15 (91 aa).

This sequence belongs to the universal ribosomal protein uS15 family. In terms of assembly, part of the 30S ribosomal subunit. Forms a bridge to the 50S subunit in the 70S ribosome, contacting the 23S rRNA.

Its function is as follows. One of the primary rRNA binding proteins, it binds directly to 16S rRNA where it helps nucleate assembly of the platform of the 30S subunit by binding and bridging several RNA helices of the 16S rRNA. Forms an intersubunit bridge (bridge B4) with the 23S rRNA of the 50S subunit in the ribosome. This Rickettsia africae (strain ESF-5) protein is Small ribosomal subunit protein uS15.